Reading from the N-terminus, the 190-residue chain is Membrane protein FAM174A (190 aa).

Residues 1-29 (MPTRRGCSGPCHFLASAFVLLLLPALNQS) form the signal peptide. Residues asparagine 27 and asparagine 83 are each glycosylated (N-linked (GlcNAc...) asparagine). The Extracellular portion of the chain corresponds to 30–123 (VVLPSTVPRA…NPSDKPMTQR (94 aa)). Positions 37-119 (PRAVQESKPL…AVSPNPSDKP (83 aa)) are disordered. Residues 124–144 (ALTVLVVVSAAVLVYFVVRTV) traverse the membrane as a helical segment. Topologically, residues 145 to 190 (RMRRRNRKTRRYGVLDTNIENMELTPLEQDDEDDDNTLFDANHPRR) are cytoplasmic. Residues 168–190 (LTPLEQDDEDDDNTLFDANHPRR) form a disordered region. Positions 172–181 (EQDDEDDDNT) are enriched in acidic residues.

The protein belongs to the FAM174 family.

Its subcellular location is the membrane. In Rattus norvegicus (Rat), this protein is Membrane protein FAM174A (Fam174a).